The chain runs to 217 residues: Pyrophosphatase PpaX (217 aa).

The Nucleophile role is filled by D11.

It belongs to the HAD-like hydrolase superfamily. PpaX family. Mg(2+) serves as cofactor.

It carries out the reaction diphosphate + H2O = 2 phosphate + H(+). Its function is as follows. Hydrolyzes pyrophosphate formed during P-Ser-HPr dephosphorylation by HPrK/P. Might play a role in controlling the intracellular pyrophosphate pool. This is Pyrophosphatase PpaX from Listeria welshimeri serovar 6b (strain ATCC 35897 / DSM 20650 / CCUG 15529 / CIP 8149 / NCTC 11857 / SLCC 5334 / V8).